The primary structure comprises 215 residues: Cytochrome b6 (215 aa).

A helical membrane pass occupies residues 32–52; the sequence is VFYCFGGMTLTCFLVQLATGF. Cysteine 35 contributes to the heme c binding site. Heme b contacts are provided by histidine 86 and histidine 100. A run of 3 helical transmembrane segments spans residues 90 to 110, 116 to 136, and 186 to 206; these read ASMM…TGGF, LTWI…VTGY, and LHTL…FLMI. The heme b site is built by histidine 187 and histidine 202.

It belongs to the cytochrome b family. PetB subfamily. In terms of assembly, the 4 large subunits of the cytochrome b6-f complex are cytochrome b6, subunit IV (17 kDa polypeptide, PetD), cytochrome f and the Rieske protein, while the 4 small subunits are PetG, PetL, PetM and PetN. The complex functions as a dimer. Requires heme b as cofactor. The cofactor is heme c.

The protein localises to the plastid. Its subcellular location is the chloroplast thylakoid membrane. Functionally, component of the cytochrome b6-f complex, which mediates electron transfer between photosystem II (PSII) and photosystem I (PSI), cyclic electron flow around PSI, and state transitions. In Cyanidium caldarium (Red alga), this protein is Cytochrome b6.